We begin with the raw amino-acid sequence, 542 residues long: GMP synthase [glutamine-hydrolyzing] (542 aa).

The Glutamine amidotransferase type-1 domain occupies 28–218 (IIVILDFGSQ…VYHICHCEPT (191 aa)). Catalysis depends on cysteine 105, which acts as the Nucleophile. Residues histidine 192 and glutamate 194 contribute to the active site. The region spanning 219–417 (WTTAAFIEES…IGLPEEIVRR (199 aa)) is the GMPS ATP-PPase domain. Position 246 to 252 (246 to 252 (SGGVDSS)) interacts with ATP.

Homodimer.

It carries out the reaction XMP + L-glutamine + ATP + H2O = GMP + L-glutamate + AMP + diphosphate + 2 H(+). It functions in the pathway purine metabolism; GMP biosynthesis; GMP from XMP (L-Gln route): step 1/1. In terms of biological role, catalyzes the synthesis of GMP from XMP. The sequence is that of GMP synthase [glutamine-hydrolyzing] (guaA) from Synechocystis sp. (strain ATCC 27184 / PCC 6803 / Kazusa).